The primary structure comprises 327 residues: Endo-1,4-beta-xylanase A (327 aa).

The GH10 domain occupies 1 to 323; it reads AASGLEAAMK…KPSYTSTLNT (323 aa). Cysteines 81 and 123 form a disulfide. N-linked (GlcNAc...) asparagine glycosylation occurs at Asn-101. Glu-131 serves as the catalytic Proton donor. Glu-245 serves as the catalytic Nucleophile. Cys-273 and Cys-279 form a disulfide bridge.

It belongs to the glycosyl hydrolase 10 (cellulase F) family. In terms of assembly, monomer.

Its subcellular location is the secreted. The protein localises to the extracellular space. It carries out the reaction Endohydrolysis of (1-&gt;4)-beta-D-xylosidic linkages in xylans.. The protein operates within glycan degradation; xylan degradation. Functionally, catalyzes the hydrolysis of the internal glycosidic bonds in heteroxylans, releasing mainly xylobiose and xylotriose. Most active on oat-spelt xylan. This is Endo-1,4-beta-xylanase A from Fusarium oxysporum f. sp. lycopersici (strain 4287 / CBS 123668 / FGSC 9935 / NRRL 34936) (Fusarium vascular wilt of tomato).